Consider the following 256-residue polypeptide: Acetyl-coenzyme A carboxylase carboxyl transferase subunit alpha (256 aa).

Residues 1-236 (MTDVARILKE…KSHLIDEITQ (236 aa)) form the CoA carboxyltransferase C-terminal domain.

The protein belongs to the AccA family. In terms of assembly, acetyl-CoA carboxylase is a heterohexamer composed of biotin carboxyl carrier protein (AccB), biotin carboxylase (AccC) and two subunits each of ACCase subunit alpha (AccA) and ACCase subunit beta (AccD).

Its subcellular location is the cytoplasm. The catalysed reaction is N(6)-carboxybiotinyl-L-lysyl-[protein] + acetyl-CoA = N(6)-biotinyl-L-lysyl-[protein] + malonyl-CoA. Its pathway is lipid metabolism; malonyl-CoA biosynthesis; malonyl-CoA from acetyl-CoA: step 1/1. In terms of biological role, component of the acetyl coenzyme A carboxylase (ACC) complex. First, biotin carboxylase catalyzes the carboxylation of biotin on its carrier protein (BCCP) and then the CO(2) group is transferred by the carboxyltransferase to acetyl-CoA to form malonyl-CoA. The chain is Acetyl-coenzyme A carboxylase carboxyl transferase subunit alpha from Streptococcus equi subsp. equi (strain 4047).